Consider the following 148-residue polypeptide: Transcriptional regulator MraZ (148 aa).

2 SpoVT-AbrB domains span residues 5 to 51 (STQL…PQPV) and 80 to 123 (ACDV…DMAK).

The protein belongs to the MraZ family. Forms oligomers.

It localises to the cytoplasm. Its subcellular location is the nucleoid. This Nitrosomonas eutropha (strain DSM 101675 / C91 / Nm57) protein is Transcriptional regulator MraZ.